Consider the following 187-residue polypeptide: Ribosome-recycling factor (187 aa).

It belongs to the RRF family.

Its subcellular location is the cytoplasm. Responsible for the release of ribosomes from messenger RNA at the termination of protein biosynthesis. May increase the efficiency of translation by recycling ribosomes from one round of translation to another. In Rhodopseudomonas palustris (strain BisA53), this protein is Ribosome-recycling factor.